Consider the following 333-residue polypeptide: Phosphate acyltransferase (333 aa).

The protein belongs to the PlsX family. As to quaternary structure, homodimer. Probably interacts with PlsY.

The protein resides in the cytoplasm. The enzyme catalyses a fatty acyl-[ACP] + phosphate = an acyl phosphate + holo-[ACP]. Its pathway is lipid metabolism; phospholipid metabolism. Catalyzes the reversible formation of acyl-phosphate (acyl-PO(4)) from acyl-[acyl-carrier-protein] (acyl-ACP). This enzyme utilizes acyl-ACP as fatty acyl donor, but not acyl-CoA. This is Phosphate acyltransferase from Lactobacillus gasseri (strain ATCC 33323 / DSM 20243 / BCRC 14619 / CIP 102991 / JCM 1131 / KCTC 3163 / NCIMB 11718 / NCTC 13722 / AM63).